A 1032-amino-acid chain; its full sequence is Protein transport protein Sec24D (1032 aa).

Residues 1 to 260 (MSQQGYVATP…GPPQPQKKLD (260 aa)) are disordered. The span at 102–133 (PSAQSSYPGPISTSSVTQLGSQLSAMQINSYG) shows a compositional bias: polar residues. Positions 198–212 (GPPPPNAQYQPPPLP) are enriched in pro residues. S266 is modified (phosphoserine). The Zn(2+) site is built by C363, C366, C385, and C388. The segment at 363 to 388 (CNRCKAYMCPFMQFIEGGRRYQCGFC) is zinc finger-like. A Gelsolin-like repeat occupies 901–974 (MLPAAVRCSE…PYSQQLRMIM (74 aa)).

It belongs to the SEC23/SEC24 family. SEC24 subfamily. In terms of assembly, COPII is composed of at least five proteins: the Sec23/24 complex, the Sec13/31 complex and Sar1. Interacts with TMED2 and TMED10. Interacts with CNIH4. Interacts with GOSR2 (via IxM motif) and STX5 (via IxM motif); recruits GOSR2 and STX5 into COPII-coated vesicles. Interacts with KCNA3; this interaction is reduced in the presence of KCNE4. Ubiquitously expressed, with higher amounts in placenta, pancreas, heart and liver.

The protein resides in the cytoplasmic vesicle. It is found in the COPII-coated vesicle membrane. The protein localises to the endoplasmic reticulum membrane. It localises to the cytoplasm. Its subcellular location is the cytosol. Its function is as follows. Component of the coat protein complex II (COPII) which promotes the formation of transport vesicles from the endoplasmic reticulum (ER). The coat has two main functions, the physical deformation of the endoplasmic reticulum membrane into vesicles and the selection of cargo molecules for their transport to the Golgi complex. Plays a central role in cargo selection within the COPII complex and together with SEC24C may have a different specificity compared to SEC24A and SEC24B. May more specifically package GPI-anchored proteins through the cargo receptor TMED10. May also be specific for IxM motif-containing cargos like the SNAREs GOSR2 and STX5. The protein is Protein transport protein Sec24D of Homo sapiens (Human).